The chain runs to 987 residues: Collagen alpha-1(I) chain (987 aa).

Residues 1-21 (SVPGPMGPSGPRGLPGPPGPG) show a composition bias toward pro residues. The tract at residues 1-987 (SVPGPMGPSG…PGPPGPPGPP (987 aa)) is disordered. 4-hydroxyproline occurs at positions 15, 18, 20, 29, 32, 35, 50, 65, 71, 80, and 86. Low complexity predominate over residues 23 to 41 (QGFQGPPGEPGEPGSSGPM). Residues 53 to 67 (NGDDGEAGKPGRPGE) are compositionally biased toward basic and acidic residues. Lysine 89 is subject to 5-hydroxylysine; alternate. O-linked (Gal...) hydroxylysine; alternate glycosylation is present at lysine 89. A Phosphoserine modification is found at serine 95. Residues 103–119 (DAGPAGPKGEPGSPGEN) are compositionally biased toward low complexity. 16 positions are modified to 4-hydroxyproline: proline 113, proline 116, proline 122, proline 131, proline 137, proline 158, proline 167, proline 170, proline 197, proline 200, proline 212, proline 218, proline 227, proline 233, proline 236, and proline 251. Over residues 137–155 (PGASGPAGARGNDGAAGAA) the composition is skewed to low complexity. The segment covering 157–169 (PPGPTGPAGPPGF) has biased composition (pro residues). A compositionally biased stretch (low complexity) spans 203–253 (AGAAGPAGNPGADGQPGAKGANGAPGIAGAPGFPGARGPSGPQGPSGAPGP). Residue lysine 254 is modified to 5-hydroxylysine. 4-hydroxyproline is present on residues proline 260, proline 263, proline 275, proline 284, proline 299, proline 305, proline 314, and proline 320. The segment covering 309 to 318 (GERGGPGSRG) has biased composition (gly residues). Lysine 329 carries the 5-hydroxylysine modification. 4-hydroxyproline is present on residues proline 338, proline 347, proline 353, proline 359, proline 368, proline 371, proline 380, proline 389, proline 395, proline 407, proline 416, proline 425, proline 428, proline 446, proline 468, proline 474, proline 480, proline 486, proline 492, proline 504, proline 513, proline 526, proline 532, and proline 541. Residues 362–388 (KGLTGSPGSPGPDGKTGPPGPAGQDGR) show a composition bias toward low complexity. Over residues 397 to 416 (ARGQAGVMGFPGPKGAAGEP) the composition is skewed to low complexity. Over residues 458–483 (QGPAPGFQGLPGPAGPPGEAGKPGEQ) the composition is skewed to low complexity. Residue lysine 553 is modified to 5-hydroxylysine. 4-hydroxyproline is present on residues proline 559, proline 574, and proline 580. Over residues 586–600 (SGPSGPAGPTGARGA) the composition is skewed to low complexity. At serine 589 the chain carries Phosphoserine. 8 positions are modified to 4-hydroxyproline: proline 601, proline 607, proline 610, proline 619, proline 625, proline 643, proline 652, and proline 661. Over residues 613–640 (AGFAGPPGADGQPGAKGEPGDAGAKGDA) the composition is skewed to low complexity. A compositionally biased stretch (pro residues) spans 642 to 654 (PPGPAGPTGPPGP). A 5-hydroxylysine modification is found at lysine 664. Residues 669 to 685 (SAGPPGATGFPGAAGRV) are compositionally biased toward low complexity. Residues proline 673 and proline 679 each carry the 4-hydroxyproline modification. Proline 687 carries the 3-hydroxyproline modification. Residues proline 688, proline 697, proline 700, proline 721, proline 730, proline 738, proline 747, proline 765, proline 774, proline 777, proline 783, proline 798, proline 804, proline 810, proline 819, and proline 825 each carry the 4-hydroxyproline modification. The segment covering 714–723 (ETGPAGRPGE) has biased composition (low complexity). Residues 735–747 (KGSPGADGPAGAP) are compositionally biased toward low complexity. The segment covering 797–807 (PPGPMGPPGLA) has biased composition (pro residues). Positions 809–824 (PPGESGREGSPGAEGS) are enriched in low complexity. Position 834 is a 5-hydroxylysine (lysine 834). Residues 843–858 (AGPPGAPGAPGAPGPV) are compositionally biased toward pro residues. Proline 846, proline 849, and proline 852 each carry 4-hydroxyproline. The segment covering 879 to 893 (AGPAGARGPAGPQGP) has biased composition (low complexity). Residues 894–905 (RGDKGETGEQGD) show a composition bias toward basic and acidic residues. Lysine 897 is modified (5-hydroxylysine). 4-hydroxyproline is present on residues proline 918, proline 921, proline 939, and proline 954. The span at 921–954 (PGEQGPSGASGPAGPRGPPGSAGSPGKDGLNGLP) shows a compositional bias: low complexity. Proline 959 bears the 3-hydroxyproline mark. 4-hydroxyproline is present on proline 960. A compositionally biased stretch (pro residues) spans 972 to 987 (VGPPGPPGPPGPPGPP). A 3-hydroxyproline modification is found at proline 974. The residue at position 975 (proline 975) is a 4-hydroxyproline. Residue proline 977 is modified to 3-hydroxyproline. Position 978 is a 4-hydroxyproline (proline 978). 3-hydroxyproline is present on proline 980. Residues proline 981, proline 984, and proline 987 each carry the 4-hydroxyproline modification.

Belongs to the fibrillar collagen family. As to quaternary structure, trimers of one alpha 2(I) and two alpha 1(I) chains. Post-translationally, contains mostly 4-hydroxyproline. Proline residues at the third position of the tripeptide repeating unit (G-X-Y) are hydroxylated in some or all of the chains. In terms of processing, contains 3-hydroxyproline at a few sites. This modification occurs on the first proline residue in the sequence motif Gly-Pro-Hyp, where Hyp is 4-hydroxyproline. Lysine residues at the third position of the tripeptide repeating unit (G-X-Y) are 5-hydroxylated in some or all of the chains. Post-translationally, O-glycosylated on hydroxylated lysine residues. The O-linked glycan consists of a Glc-Gal disaccharide. As to expression, expressed in bones.

It is found in the secreted. The protein localises to the extracellular space. It localises to the extracellular matrix. Type I collagen is a member of group I collagen (fibrillar forming collagen). The sequence is that of Collagen alpha-1(I) chain from Glossotherium robustum (Ground sloth).